Reading from the N-terminus, the 166-residue chain is UPF0336 protein ML1908 (166 aa).

The protein belongs to the UPF0336 family.

In Mycobacterium leprae (strain TN), this protein is UPF0336 protein ML1908.